A 446-amino-acid polypeptide reads, in one-letter code: Probable D-serine dehydratase (446 aa).

Lys113 carries the N6-(pyridoxal phosphate)lysine modification.

The protein belongs to the serine/threonine dehydratase family. DsdA subfamily. Requires pyridoxal 5'-phosphate as cofactor.

The enzyme catalyses D-serine = pyruvate + NH4(+). The sequence is that of Probable D-serine dehydratase from Burkholderia lata (strain ATCC 17760 / DSM 23089 / LMG 22485 / NCIMB 9086 / R18194 / 383).